The sequence spans 203 residues: UPF0637 protein Sca_0732 (203 aa).

It belongs to the UPF0637 family.

This is UPF0637 protein Sca_0732 from Staphylococcus carnosus (strain TM300).